The sequence spans 579 residues: Arginine--tRNA ligase (579 aa).

Positions Pro123–His133 match the 'HIGH' region motif.

Belongs to the class-I aminoacyl-tRNA synthetase family. In terms of assembly, monomer.

It is found in the cytoplasm. The enzyme catalyses tRNA(Arg) + L-arginine + ATP = L-arginyl-tRNA(Arg) + AMP + diphosphate. This is Arginine--tRNA ligase from Cellvibrio japonicus (strain Ueda107) (Pseudomonas fluorescens subsp. cellulosa).